Reading from the N-terminus, the 107-residue chain is UPF0122 protein BLi01817/BL02321 (107 aa).

This sequence belongs to the UPF0122 family.

Its function is as follows. Might take part in the signal recognition particle (SRP) pathway. This is inferred from the conservation of its genetic proximity to ftsY/ffh. May be a regulatory protein. This Bacillus licheniformis (strain ATCC 14580 / DSM 13 / JCM 2505 / CCUG 7422 / NBRC 12200 / NCIMB 9375 / NCTC 10341 / NRRL NRS-1264 / Gibson 46) protein is UPF0122 protein BLi01817/BL02321.